Consider the following 55-residue polypeptide: Large ribosomal subunit protein bL33 (55 aa).

It belongs to the bacterial ribosomal protein bL33 family.

This is Large ribosomal subunit protein bL33 from Allorhizobium ampelinum (strain ATCC BAA-846 / DSM 112012 / S4) (Agrobacterium vitis (strain S4)).